Consider the following 278-residue polypeptide: tRNA pseudouridine synthase A (278 aa).

Asp52 serves as the catalytic Nucleophile. Substrate is bound at residue Tyr111. Positions 253-264 (AKAGPLEAAPLG) are enriched in low complexity. A disordered region spans residues 253–278 (AKAGPLEAAPLGEAPLKEATLKEDWR). Residues 267 to 278 (PLKEATLKEDWR) show a composition bias toward basic and acidic residues.

This sequence belongs to the tRNA pseudouridine synthase TruA family. In terms of assembly, homodimer.

It catalyses the reaction uridine(38/39/40) in tRNA = pseudouridine(38/39/40) in tRNA. Functionally, formation of pseudouridine at positions 38, 39 and 40 in the anticodon stem and loop of transfer RNAs. The protein is tRNA pseudouridine synthase A of Rhodospirillum rubrum (strain ATCC 11170 / ATH 1.1.1 / DSM 467 / LMG 4362 / NCIMB 8255 / S1).